An 872-amino-acid polypeptide reads, in one-letter code: G-type lectin S-receptor-like serine/threonine-protein kinase At5g24080 (872 aa).

The N-terminal stretch at 1–25 (MSSFHFYFPSVGLFSFFCFFLVSLA) is a signal peptide. Topologically, residues 26–472 (TEPHIGLGSK…SRKSHGLRQK (447 aa)) are extracellular. Residues 30 to 149 (IGLGSKLKAS…EVTAGPTIWQ (120 aa)) enclose the Bulb-type lectin domain. N-linked (GlcNAc...) asparagine glycosylation is found at N49, N117, N208, N219, N261, and N294. The 39-residue stretch at 306–344 (VSNPCDIAGICGNGVCNLDRTKKNADCLCLPGSVKLPDQ) folds into the EGF-like; atypical domain. Disulfide bonds link C310/C321 and C316/C332. 3 N-linked (GlcNAc...) asparagine glycosylation sites follow: N353, N367, and N390. In terms of domain architecture, PAN spans 360-447 (CESNINRNGS…PGSTLFVKTR (88 aa)). Intrachain disulfides connect C400-C424 and C404-C410. N-linked (GlcNAc...) asparagine glycans are attached at residues N449 and N459. The chain crosses the membrane as a helical span at residues 473-493 (VLVIPIVVGMLVLVALLGMLL). Over 494–872 (YYNLDRKRTL…TCSYSSMSPR (379 aa)) the chain is Cytoplasmic. Residue T521 is modified to Phosphothreonine. The 281-residue stretch at 530–810 (NNFSQLLGSG…LEGTSDEINL (281 aa)) folds into the Protein kinase domain. Residues 536 to 544 (LGSGGFGTV) and K558 contribute to the ATP site. Position 603 is a phosphotyrosine (Y603). The segment at 619-637 (EQTANLLDWRTRFEIAVAT) is caM-binding. D656 functions as the Proton acceptor in the catalytic mechanism. Phosphothreonine is present on residues T690 and T695.

It belongs to the protein kinase superfamily. Ser/Thr protein kinase family.

It localises to the cell membrane. It carries out the reaction L-seryl-[protein] + ATP = O-phospho-L-seryl-[protein] + ADP + H(+). The enzyme catalyses L-threonyl-[protein] + ATP = O-phospho-L-threonyl-[protein] + ADP + H(+). This is G-type lectin S-receptor-like serine/threonine-protein kinase At5g24080 from Arabidopsis thaliana (Mouse-ear cress).